The chain runs to 715 residues: Autophagy-related protein 13 (715 aa).

The segment at 329–510 is disordered; sequence DYMERRRSSG…PGSGFIDIED (182 aa). Residues 340 to 381 are compositionally biased toward gly residues; that stretch reads SGVGATGGGLAGTSGGSGGVSGGVSGGSGGSGGSGGWGGEEG. Composition is skewed to low complexity over residues 382–392, 414–432, and 445–455; these read SPGPAATSASP, RTIS…VVTT, and SSSGGSSRSGS. Over residues 458-476 the composition is skewed to polar residues; that stretch reads KYSSSFGTRQWNRSGSISS. The segment covering 486–500 has biased composition (low complexity); the sequence is GSAESAMSSGSSLME.

This sequence belongs to the ATG13 family. Fungi subfamily. In terms of assembly, interacts with ATG1 to form the ATG1-ATG13 kinase complex.

The protein localises to the cytoplasm. The protein resides in the preautophagosomal structure. Functionally, activates the ATG1 kinase in a nutritional condition dependent manner through the TOR pathway, leading to autophagy. Also involved in cytoplasm to vacuole transport (Cvt) and more specifically in Cvt vesicle formation. Seems to play a role in the switching machinery regulating the conversion between the Cvt pathway and autophagy. Finally, ATG13 is also required for glycogen storage during stationary phase. This is Autophagy-related protein 13 (ATG13) from Yarrowia lipolytica (strain CLIB 122 / E 150) (Yeast).